A 505-amino-acid chain; its full sequence is Lysine--tRNA ligase, heat inducible (505 aa).

N6-acetyllysine occurs at positions 114 and 156. Mg(2+) is bound by residues Glu-415 and Glu-422.

The protein belongs to the class-II aminoacyl-tRNA synthetase family. In terms of assembly, homodimer. Mg(2+) is required as a cofactor.

It is found in the cytoplasm. The catalysed reaction is tRNA(Lys) + L-lysine + ATP = L-lysyl-tRNA(Lys) + AMP + diphosphate. The sequence is that of Lysine--tRNA ligase, heat inducible (lysU) from Escherichia coli O157:H7.